The sequence spans 75 residues: Small integral membrane protein 7 (75 aa).

The first 17 residues, 1-17 (MIGDILLFGTLLMNAGA), serve as a signal peptide directing secretion. The Extracellular portion of the chain corresponds to 18–53 (VLNFKLKKKDTQGFGEESKEPSTGDNIREFLLSLRY). Residues 54–74 (FRIFIALWNVFMMLCMIVLFG) form a helical membrane-spanning segment. Position 75 (S75) is a topological domain, cytoplasmic.

This sequence belongs to the SMIM7 family.

The protein localises to the membrane. The polypeptide is Small integral membrane protein 7 (Smim7) (Mus musculus (Mouse)).